Here is an 869-residue protein sequence, read N- to C-terminus: Dynamin-3 (869 aa).

Residues 28–294 (LLELPQIAVV…LTNHIRDTLP (267 aa)) enclose the Dynamin-type G domain. The tract at residues 38 to 45 (GGQSAGKS) is G1 motif. 38–46 (GGQSAGKSS) contacts GTP. The G2 motif stretch occupies residues 64 to 66 (VTR). Positions 136–139 (DLPG) are G3 motif. Positions 205–208 (TKLD) are G4 motif. Residue 205–211 (TKLDLMD) coordinates GTP. A Phosphotyrosine modification is found at Tyr231. The tract at residues 235–238 (VNRS) is G5 motif. 236–239 (NRSQ) contributes to the GTP binding site. An N6-acetyllysine modification is found at Lys299. The region spanning 525–631 (IVIRKGWLTV…WKASLLRAGV (107 aa)) is the PH domain. A Phosphotyrosine modification is found at Tyr603. An N6-acetyllysine modification is found at Lys604. Residues 659–750 (VETIRNLVDS…IIGDINTVTV (92 aa)) form the GED domain. Residues 752 to 869 (TPAPPPVDDS…IRPLESSLLD (118 aa)) form a disordered region. Residues Ser769 and Ser773 each carry the phosphoserine modification. The segment covering 775 to 796 (TTQRRLTLSAPLPRPASSRGPA) has biased composition (low complexity). 2 stretches are compositionally biased toward pro residues: residues 797-822 (PAIP…PPFP) and 832-855 (PQVP…PSPT). Position 853 is a phosphoserine (Ser853).

It belongs to the TRAFAC class dynamin-like GTPase superfamily. Dynamin/Fzo/YdjA family. As to expression, isoform-specific expression in germ-cell-depleted testis (Sertoli cells), brain (peripheral sensory neurons), lung and heart.

The protein resides in the cytoplasm. It localises to the cytoskeleton. Its subcellular location is the cytoplasmic vesicle. The protein localises to the golgi apparatus. It carries out the reaction GTP + H2O = GDP + phosphate + H(+). Microtubule-associated force-producing protein involved in producing microtubule bundles and able to bind and hydrolyze GTP. Most probably involved in vesicular trafficking processes, in particular endocytosis. This Rattus norvegicus (Rat) protein is Dynamin-3 (Dnm3).